Here is a 180-residue protein sequence, read N- to C-terminus: Large ribosomal subunit protein uL5 (180 aa).

This sequence belongs to the universal ribosomal protein uL5 family. As to quaternary structure, part of the 50S ribosomal subunit; part of the 5S rRNA/L5/L18/L25 subcomplex. Contacts the 5S rRNA and the P site tRNA. Forms a bridge to the 30S subunit in the 70S ribosome.

This is one of the proteins that bind and probably mediate the attachment of the 5S RNA into the large ribosomal subunit, where it forms part of the central protuberance. In the 70S ribosome it contacts protein S13 of the 30S subunit (bridge B1b), connecting the 2 subunits; this bridge is implicated in subunit movement. Contacts the P site tRNA; the 5S rRNA and some of its associated proteins might help stabilize positioning of ribosome-bound tRNAs. The polypeptide is Large ribosomal subunit protein uL5 (Xanthomonas euvesicatoria pv. vesicatoria (strain 85-10) (Xanthomonas campestris pv. vesicatoria)).